Consider the following 591-residue polypeptide: Serine/threonine-protein kinase PAK 4 (591 aa).

The region spanning 11–24 (ISAPSNFEHRVHTG) is the CRIB domain. The linker stretch occupies residues 25-320 (FDQHEQKFTG…VVDPGDPRSY (296 aa)). Ser41 is subject to Phosphoserine. At Lys78 the chain carries N6-methyllysine. Residues 95 to 301 (TRSNSLRRDS…PQREPQRVSH (207 aa)) are disordered. A phosphoserine mark is found at Ser104 and Ser148. Positions 149 to 164 (GDRRRAGPEKRPKSSR) are enriched in basic and acidic residues. Ser167 and Ser181 each carry phosphoserine. Thr187 carries the phosphothreonine modification. Low complexity predominate over residues 191–202 (AGLASGAKLAAG). Phosphoserine is present on Ser195. At Thr207 the chain carries Phosphothreonine. Positions 242-260 (SSSSSSRPPTRARGAPSPG) are enriched in low complexity. A phosphoserine mark is found at Ser258 and Ser267. Residues 271–290 (LAPPACTPAAPAVPGPPGPR) show a composition bias toward pro residues. Residue Ser291 is modified to Phosphoserine. The span at 292-301 (PQREPQRVSH) shows a compositional bias: basic and acidic residues. The segment at 298-323 (RVSHEQFRAALQLVVDPGDPRSYLDN) is GEF-interaction domain (GID). Positions 321 to 572 (LDNFIKIGEG…AAELLKHPFL (252 aa)) constitute a Protein kinase domain. ATP contacts are provided by residues 327-335 (IGEGSTGIV), Lys350, and 396-398 (EFL). The Proton acceptor role is filled by Asp440. 458-460 (DFG) contacts ATP. Ser474 carries the phosphoserine; by autocatalysis modification.

This sequence belongs to the protein kinase superfamily. STE Ser/Thr protein kinase family. STE20 subfamily. As to quaternary structure, interacts with FGFR2 and GRB2. Interacts tightly with GTP-bound but not GDP-bound CDC42/p21 and weakly with RAC1. Interacts with INKA1. Interacts with SH3RF2. Interacts with RHOU and PAXI; the PAK4-RHOU complex protects RHOU from ubiquitination and acts as a scaffold to suppport paxillin/PAXI phosphorylation. Autophosphorylated on serine residues when activated by CDC42/p21. Phosphorylated on tyrosine residues upon stimulation of FGFR2. Methylated by SETD6. Post-translationally, polyubiquitinated, leading to its proteasomal degradation. In terms of tissue distribution, highest expression in prostate, testis and colon.

The protein resides in the cytoplasm. The enzyme catalyses L-seryl-[protein] + ATP = O-phospho-L-seryl-[protein] + ADP + H(+). It catalyses the reaction L-threonyl-[protein] + ATP = O-phospho-L-threonyl-[protein] + ADP + H(+). Inhibited by INKA1; which inhibits the serine/threonine-protein kinase activity by binding PAK4 in a substrate-like manner. In terms of biological role, serine/threonine-protein kinase that plays a role in a variety of different signaling pathways including cytoskeleton regulation, cell adhesion turnover, cell migration, growth, proliferation or cell survival. Activation by various effectors including growth factor receptors or active CDC42 and RAC1 results in a conformational change and a subsequent autophosphorylation on several serine and/or threonine residues. Phosphorylates and inactivates the protein phosphatase SSH1, leading to increased inhibitory phosphorylation of the actin binding/depolymerizing factor cofilin. Decreased cofilin activity may lead to stabilization of actin filaments. Phosphorylates LIMK1, a kinase that also inhibits the activity of cofilin. Phosphorylates integrin beta5/ITGB5 and thus regulates cell motility. Phosphorylates ARHGEF2 and activates the downstream target RHOA that plays a role in the regulation of assembly of focal adhesions and actin stress fibers. Stimulates cell survival by phosphorylating the BCL2 antagonist of cell death BAD. Alternatively, inhibits apoptosis by preventing caspase-8 binding to death domain receptors in a kinase independent manner. Plays a role in cell-cycle progression by controlling levels of the cell-cycle regulatory protein CDKN1A and by phosphorylating RAN. Promotes kinase-independent stabilization of RHOU, thereby contributing to focal adhesion disassembly during cell migration. This Homo sapiens (Human) protein is Serine/threonine-protein kinase PAK 4.